The chain runs to 261 residues: Imidazole glycerol phosphate synthase subunit HisF (261 aa).

Catalysis depends on residues Asp-16 and Asp-135.

The protein belongs to the HisA/HisF family. As to quaternary structure, heterodimer of HisH and HisF.

It is found in the cytoplasm. The enzyme catalyses 5-[(5-phospho-1-deoxy-D-ribulos-1-ylimino)methylamino]-1-(5-phospho-beta-D-ribosyl)imidazole-4-carboxamide + L-glutamine = D-erythro-1-(imidazol-4-yl)glycerol 3-phosphate + 5-amino-1-(5-phospho-beta-D-ribosyl)imidazole-4-carboxamide + L-glutamate + H(+). Its pathway is amino-acid biosynthesis; L-histidine biosynthesis; L-histidine from 5-phospho-alpha-D-ribose 1-diphosphate: step 5/9. Functionally, IGPS catalyzes the conversion of PRFAR and glutamine to IGP, AICAR and glutamate. The HisF subunit catalyzes the cyclization activity that produces IGP and AICAR from PRFAR using the ammonia provided by the HisH subunit. The sequence is that of Imidazole glycerol phosphate synthase subunit HisF from Mycolicibacterium vanbaalenii (strain DSM 7251 / JCM 13017 / BCRC 16820 / KCTC 9966 / NRRL B-24157 / PYR-1) (Mycobacterium vanbaalenii).